Consider the following 164-residue polypeptide: Transcription elongation factor GreA (164 aa).

A coiled-coil region spans residues Tyr50 to Val76.

Belongs to the GreA/GreB family.

Its function is as follows. Necessary for efficient RNA polymerase transcription elongation past template-encoded arresting sites. The arresting sites in DNA have the property of trapping a certain fraction of elongating RNA polymerases that pass through, resulting in locked ternary complexes. Cleavage of the nascent transcript by cleavage factors such as GreA or GreB allows the resumption of elongation from the new 3'terminus. GreA releases sequences of 2 to 3 nucleotides. This Mycobacterium bovis (strain ATCC BAA-935 / AF2122/97) protein is Transcription elongation factor GreA.